A 224-amino-acid polypeptide reads, in one-letter code: UPF0502 protein Psyr_2419 (224 aa).

It belongs to the UPF0502 family.

The protein is UPF0502 protein Psyr_2419 of Pseudomonas syringae pv. syringae (strain B728a).